Reading from the N-terminus, the 523-residue chain is Probable DNA ligase (523 aa).

E210 provides a ligand contact to ATP. Residue K212 is the N6-AMP-lysine intermediate of the active site. 6 residues coordinate ATP: R217, R232, E261, F317, R388, and K394.

It belongs to the ATP-dependent DNA ligase family. The cofactor is Mg(2+).

The catalysed reaction is ATP + (deoxyribonucleotide)n-3'-hydroxyl + 5'-phospho-(deoxyribonucleotide)m = (deoxyribonucleotide)n+m + AMP + diphosphate.. Functionally, DNA ligase that seals nicks in double-stranded DNA during DNA replication, DNA recombination and DNA repair. This Nocardia farcinica (strain IFM 10152) protein is Probable DNA ligase.